Here is a 289-residue protein sequence, read N- to C-terminus: NAC domain-containing protein 2 (289 aa).

One can recognise an NAC domain in the interval 7-158 (LPPGFRFHPT…DWVLCRIYNK (152 aa)).

In terms of assembly, interacts with KIN10 and KIN11.

It is found in the nucleus. In Arabidopsis thaliana (Mouse-ear cress), this protein is NAC domain-containing protein 2 (NAC002).